The following is a 103-amino-acid chain: uncharacterized protein (103 aa).

This is an uncharacterized protein from Microplitis demolitor (Parasitoid wasp).